Here is a 1328-residue protein sequence, read N- to C-terminus: 5'-3' exoribonuclease 1 (1328 aa).

The tract at residues 1211 to 1328 (AGKNRKTNVS…VQPMGKLQIN (118 aa)) is disordered. Over residues 1217–1231 (TNVSANNVSQGTDSR) the composition is skewed to polar residues. Residues 1275–1286 (HKSKSKFSKGNH) are compositionally biased toward basic residues.

The protein belongs to the 5'-3' exonuclease family. Monomer. Mg(2+) is required as a cofactor.

It is found in the cytoplasm. Its subcellular location is the perinuclear region. The protein localises to the P-body. Its activity is regulated as follows. Strand exchange activity is enhanced by fatty acid synthase (stimulatory factor P190/210). Functionally, multifunctional protein that exhibits several independent functions at different levels of the cellular processes. 5'-3' exonuclease component of the nonsense-mediated mRNA decay (NMD) which is a highly conserved mRNA degradation pathway, an RNA surveillance system whose role is to identify and rid cells of mRNA with premature termination codons and thus prevents accumulation of potentially harmful truncated proteins. Involved in the degradation of several hypomodified mature tRNA species and participates in the 5'-processing or the degradation of the snoRNA precursors and rRNA processing. The chain is 5'-3' exoribonuclease 1 (exo2) from Schizosaccharomyces pombe (strain 972 / ATCC 24843) (Fission yeast).